The primary structure comprises 321 residues: Ubiquitin carboxyl-terminal hydrolase ubh-4 (321 aa).

The 215-residue stretch at 6 to 220 (SWCLIESDPG…ITFNLMALVP (215 aa)) folds into the UCH catalytic domain. Cysteine 83 acts as the Nucleophile in catalysis. Histidine 158 (proton donor) is an active-site residue. The ULD domain maps to 273 to 301 (NYTPFVIELMKILAKEGKLVGLVDNAYQA).

Belongs to the peptidase C12 family. As to quaternary structure, interacts with proteasome 19S subunit rpn-13. As to expression, highly expressed in intestine and to a lesser extent in other tissues including muscles and neurons.

The enzyme catalyses Thiol-dependent hydrolysis of ester, thioester, amide, peptide and isopeptide bonds formed by the C-terminal Gly of ubiquitin (a 76-residue protein attached to proteins as an intracellular targeting signal).. Functionally, ubiquitin-protein hydrolase involved both in the processing of ubiquitin precursors and of ubiquitinated proteins. This enzyme is a thiol protease that recognizes and hydrolyzes a peptide bond at the C-terminal glycine of ubiquitin. This chain is Ubiquitin carboxyl-terminal hydrolase ubh-4, found in Caenorhabditis elegans.